The chain runs to 533 residues: Protein trichome birefringence-like 18 (533 aa).

Residues 21 to 41 traverse the membrane as a helical; Signal-anchor for type II membrane protein segment; the sequence is VSTVAIAIGGLASFFVFGLLL. The interval 93-171 is disordered; that stretch reads SDSSSGLPVV…PDDVSETASA (79 aa). Positions 113 to 154 are enriched in basic and acidic residues; that stretch reads SSDRKLETPLTQEKEDLVSSDITEKTDVQSGERETNVSKAED. The short motif at 248–250 is the GDS motif element; that stretch reads GDS. A disordered region spans residues 475–502; the sequence is HDGHPGPFRSPDPNKITKRGPDGRPPPQ. A DCXHWCLPGXXDXWN motif motif is present at residues 503–517; the sequence is DCLHWCMPGPVDTWN.

Belongs to the PC-esterase family. TBL subfamily.

The protein localises to the membrane. Functionally, may act as a bridging protein that binds pectin and other cell wall polysaccharides. Probably involved in maintaining esterification of pectins. May be involved in the specific O-acetylation of cell wall polymers. The polypeptide is Protein trichome birefringence-like 18 (TBL18) (Arabidopsis thaliana (Mouse-ear cress)).